Here is a 33-residue protein sequence, read N- to C-terminus: Brevinin-2PTe (33 aa).

C27 and C33 are oxidised to a cystine.

In terms of tissue distribution, expressed by the skin glands.

It is found in the secreted. Has antibacterial activity against the Gram-positive bacterium S.aureus ATCC 25923 (MIC=36 uM) and the Gram-negative bacterium E.coli ATCC 25726 (MIC=18 uM). This chain is Brevinin-2PTe, found in Pulchrana picturata (Malaysian fire frog).